The primary structure comprises 405 residues: Argininosuccinate synthase (405 aa).

Residues 10–18 and Ala-37 contribute to the ATP site; that span reads AYSGGLDTS. L-citrulline is bound by residues Tyr-88 and Ser-93. Residue Gly-118 participates in ATP binding. L-aspartate is bound by residues Thr-120, Asn-124, and Asp-125. Asn-124 is an L-citrulline binding site. L-citrulline is bound by residues Arg-128, Ser-179, Ser-188, Glu-264, and Tyr-276.

It belongs to the argininosuccinate synthase family. Type 1 subfamily. As to quaternary structure, homotetramer.

The protein resides in the cytoplasm. It carries out the reaction L-citrulline + L-aspartate + ATP = 2-(N(omega)-L-arginino)succinate + AMP + diphosphate + H(+). The protein operates within amino-acid biosynthesis; L-arginine biosynthesis; L-arginine from L-ornithine and carbamoyl phosphate: step 2/3. The chain is Argininosuccinate synthase from Pseudomonas aeruginosa (strain LESB58).